A 111-amino-acid chain; its full sequence is MTGLMKAFQKLSPTKRQYAEITQSNSSISSSSSGSKYNDSSSGRYTPLSEEGRTSARASTSTQAQKPASSQQKGGTSSREDEQKLLRKLQTTFGEASNLLNEYVDMRSRKK.

A disordered region spans residues 1-85 (MTGLMKAFQK…TSSREDEQKL (85 aa)). The segment covering 11–23 (LSPTKRQYAEITQ) has biased composition (polar residues). Over residues 24 to 42 (SNSSISSSSSGSKYNDSSS) the composition is skewed to low complexity. Residues 56 to 77 (ARASTSTQAQKPASSQQKGGTS) are compositionally biased toward polar residues.

This is an uncharacterized protein from Microplitis demolitor (Parasitoid wasp).